The primary structure comprises 431 residues: Selenocysteine lyase (431 aa).

N6-(pyridoxal phosphate)lysine is present on lysine 239. Cysteine 367 functions as the S-selanylcysteine intermediate in the catalytic mechanism.

Belongs to the class-V pyridoxal-phosphate-dependent aminotransferase family. In terms of assembly, homodimer. Pyridoxal 5'-phosphate serves as cofactor.

It localises to the cytoplasm. Its subcellular location is the cytosol. It catalyses the reaction L-selenocysteine + AH2 = hydrogenselenide + L-alanine + A + H(+). Its function is as follows. Catalyzes the decomposition of L-selenocysteine to L-alanine and elemental selenium. The protein is Selenocysteine lyase (scly) of Xenopus tropicalis (Western clawed frog).